A 242-amino-acid polypeptide reads, in one-letter code: Ubiquinone biosynthesis O-methyltransferase (242 aa).

Arg44, Gly64, Asp85, and Met129 together coordinate S-adenosyl-L-methionine.

This sequence belongs to the methyltransferase superfamily. UbiG/COQ3 family.

The enzyme catalyses a 3-demethylubiquinol + S-adenosyl-L-methionine = a ubiquinol + S-adenosyl-L-homocysteine + H(+). It carries out the reaction a 3-(all-trans-polyprenyl)benzene-1,2-diol + S-adenosyl-L-methionine = a 2-methoxy-6-(all-trans-polyprenyl)phenol + S-adenosyl-L-homocysteine + H(+). The protein operates within cofactor biosynthesis; ubiquinone biosynthesis. O-methyltransferase that catalyzes the 2 O-methylation steps in the ubiquinone biosynthetic pathway. The polypeptide is Ubiquinone biosynthesis O-methyltransferase (Yersinia pseudotuberculosis serotype O:1b (strain IP 31758)).